The following is a 276-amino-acid chain: Diaminopimelate epimerase (276 aa).

Substrate contacts are provided by Asn-13, Gln-46, and Asn-66. The active-site Proton donor is Cys-75. Substrate-binding positions include Gly-76–Asn-77, Asn-159, Asn-192, and Glu-210–Arg-211. Cys-219 acts as the Proton acceptor in catalysis. Gly-220–Ser-221 is a substrate binding site.

It belongs to the diaminopimelate epimerase family. As to quaternary structure, homodimer.

Its subcellular location is the cytoplasm. The enzyme catalyses (2S,6S)-2,6-diaminopimelate = meso-2,6-diaminopimelate. Its pathway is amino-acid biosynthesis; L-lysine biosynthesis via DAP pathway; DL-2,6-diaminopimelate from LL-2,6-diaminopimelate: step 1/1. Its function is as follows. Catalyzes the stereoinversion of LL-2,6-diaminopimelate (L,L-DAP) to meso-diaminopimelate (meso-DAP), a precursor of L-lysine and an essential component of the bacterial peptidoglycan. The sequence is that of Diaminopimelate epimerase from Vibrio atlanticus (strain LGP32) (Vibrio splendidus (strain Mel32)).